The chain runs to 154 residues: DNA gyrase inhibitor (154 aa).

It belongs to the DNA gyrase inhibitor family. In terms of assembly, interacts with DNA gyrase.

Its subcellular location is the cytoplasm. Inhibits the supercoiling activity of DNA gyrase. Acts by inhibiting DNA gyrase at an early step, prior to (or at the step of) binding of DNA by the gyrase. It protects cells against toxins that target DNA gyrase, by inhibiting activity of these toxins and reducing the formation of lethal double-strand breaks in the cell. The polypeptide is DNA gyrase inhibitor (Pectobacterium carotovorum subsp. carotovorum (strain PC1)).